The following is a 333-amino-acid chain: Phosphate acyltransferase (333 aa).

The protein belongs to the PlsX family. In terms of assembly, homodimer. Probably interacts with PlsY.

The protein localises to the cytoplasm. It carries out the reaction a fatty acyl-[ACP] + phosphate = an acyl phosphate + holo-[ACP]. It functions in the pathway lipid metabolism; phospholipid metabolism. Catalyzes the reversible formation of acyl-phosphate (acyl-PO(4)) from acyl-[acyl-carrier-protein] (acyl-ACP). This enzyme utilizes acyl-ACP as fatty acyl donor, but not acyl-CoA. The protein is Phosphate acyltransferase of Clostridium beijerinckii (strain ATCC 51743 / NCIMB 8052) (Clostridium acetobutylicum).